The chain runs to 96 residues: Exodeoxyribonuclease 7 small subunit (96 aa).

The tract at residues 73–96 is disordered; that stretch reads RAPEQSAANDVSAPGSAEEHDHGR.

This sequence belongs to the XseB family. In terms of assembly, heterooligomer composed of large and small subunits.

Its subcellular location is the cytoplasm. It catalyses the reaction Exonucleolytic cleavage in either 5'- to 3'- or 3'- to 5'-direction to yield nucleoside 5'-phosphates.. Its function is as follows. Bidirectionally degrades single-stranded DNA into large acid-insoluble oligonucleotides, which are then degraded further into small acid-soluble oligonucleotides. In Acidothermus cellulolyticus (strain ATCC 43068 / DSM 8971 / 11B), this protein is Exodeoxyribonuclease 7 small subunit.